Consider the following 750-residue polypeptide: Eukaryotic translation initiation factor 3 subunit B (750 aa).

Residues 42 to 128 (TFVVVDGLPE…HTLRVNKMTD (87 aa)) enclose the RRM domain. 4 WD repeats span residues 195–234 (DRQQ…RLRR), 236–292 (PHPF…PLRS), 309–348 (SAKF…LMDK), and 519–562 (LDKK…EKPE).

The protein belongs to the eIF-3 subunit B family. Component of the eukaryotic translation initiation factor 3 (eIF-3) complex.

It localises to the cytoplasm. Its function is as follows. RNA-binding component of the eukaryotic translation initiation factor 3 (eIF-3) complex, which is involved in protein synthesis of a specialized repertoire of mRNAs and, together with other initiation factors, stimulates binding of mRNA and methionyl-tRNAi to the 40S ribosome. The eIF-3 complex specifically targets and initiates translation of a subset of mRNAs involved in cell proliferation. This Chaetomium globosum (strain ATCC 6205 / CBS 148.51 / DSM 1962 / NBRC 6347 / NRRL 1970) (Soil fungus) protein is Eukaryotic translation initiation factor 3 subunit B.